We begin with the raw amino-acid sequence, 213 residues long: Thymidylate kinase (213 aa).

Residue 10–17 coordinates ATP; it reads GLEGAGKT.

This sequence belongs to the thymidylate kinase family.

The enzyme catalyses dTMP + ATP = dTDP + ADP. Its function is as follows. Phosphorylation of dTMP to form dTDP in both de novo and salvage pathways of dTTP synthesis. The protein is Thymidylate kinase of Salmonella arizonae (strain ATCC BAA-731 / CDC346-86 / RSK2980).